Reading from the N-terminus, the 250-residue chain is MATMACASSLTFPSAQTQKSFFGTNVKQTPVLSFPRPTVAAAVAVSARKSTSASTKCTEEWRQLKEAVKKEFAIPHVPLDQRWMFTLEEATGPDIWNTTWYPKSADHVPTDKKWYVVDATDLILGRMASTIAIHIRGKNLASYTPSVDMGAFVIVVNADKVAVSGKKRTQKLYRRHSGRPGGLKEETFDQLQKRIPERIIEHAVRGMLPKGRLGRYLFNHLKVYKGAEHPHQAQQPIDLPLRDKRIRVEK.

Residues 1–47 (MATMACASSLTFPSAQTQKSFFGTNVKQTPVLSFPRPTVAAAVAVSA) constitute a chloroplast transit peptide.

In terms of assembly, component of the chloroplast large ribosomal subunit (LSU). Mature 70S chloroplast ribosomes of higher plants consist of a small (30S) and a large (50S) subunit. The 30S small subunit contains 1 molecule of ribosomal RNA (16S rRNA) and 24 different proteins. The 50S large subunit contains 3 rRNA molecules (23S, 5S and 4.5S rRNA) and 33 different proteins.

Its subcellular location is the plastid. The protein resides in the chloroplast. Functionally, component of the chloroplast ribosome (chloro-ribosome), a dedicated translation machinery responsible for the synthesis of chloroplast genome-encoded proteins, including proteins of the transcription and translation machinery and components of the photosynthetic apparatus. This is Large ribosomal subunit protein uL13c (RPL13) from Spinacia oleracea (Spinach).